The chain runs to 112 residues: T cell receptor alpha variable 7 (112 aa).

Residues 1-21 form the signal peptide; it reads MEKMRRPVLIIFCLCLGWANG. Residues 22–112 enclose the Ig-like domain; the sequence is ENQVEHSPHF…DSATYFCAVD (91 aa). Cys44 and Cys109 are joined by a disulfide. Asn84 and Asn90 each carry an N-linked (GlcNAc...) asparagine glycan.

Alpha-beta TR is a heterodimer composed of an alpha and beta chain; disulfide-linked. The alpha-beta TR is associated with the transmembrane signaling CD3 coreceptor proteins to form the TR-CD3 (TcR or TCR). The assembly of alpha-beta TR heterodimers with CD3 occurs in the endoplasmic reticulum where a single alpha-beta TR heterodimer associates with one CD3D-CD3E heterodimer, one CD3G-CD3E heterodimer and one CD247 homodimer forming a stable octameric structure. CD3D-CD3E and CD3G-CD3E heterodimers preferentially associate with TR alpha and TR beta chains, respectively. The association of the CD247 homodimer is the last step of TcR assembly in the endoplasmic reticulum and is required for transport to the cell surface.

It is found in the cell membrane. In terms of biological role, v region of the variable domain of T cell receptor (TR) alpha chain that participates in the antigen recognition. Alpha-beta T cell receptors are antigen specific receptors which are essential to the immune response and are present on the cell surface of T lymphocytes. Recognize peptide-major histocompatibility (MH) (pMH) complexes that are displayed by antigen presenting cells (APC), a prerequisite for efficient T cell adaptive immunity against pathogens. Binding of alpha-beta TR to pMH complex initiates TR-CD3 clustering on the cell surface and intracellular activation of LCK that phosphorylates the ITAM motifs of CD3G, CD3D, CD3E and CD247 enabling the recruitment of ZAP70. In turn ZAP70 phosphorylates LAT, which recruits numerous signaling molecules to form the LAT signalosome. The LAT signalosome propagates signal branching to three major signaling pathways, the calcium, the mitogen-activated protein kinase (MAPK) kinase and the nuclear factor NF-kappa-B (NF-kB) pathways, leading to the mobilization of transcription factors that are critical for gene expression and essential for T cell growth and differentiation. The T cell repertoire is generated in the thymus, by V-(D)-J rearrangement. This repertoire is then shaped by intrathymic selection events to generate a peripheral T cell pool of self-MH restricted, non-autoaggressive T cells. Post-thymic interaction of alpha-beta TR with the pMH complexes shapes TR structural and functional avidity. This is T cell receptor alpha variable 7 from Homo sapiens (Human).